Consider the following 568-residue polypeptide: MEVIKHEGPGRLGVVRLGDYSFRTPALVGIDFTLSPFNSFFHPKEPGEYDFNLAPSIPLGFYTPDEVIQKAIGRLWSVNYDGFNAFYLPALRRTEYLEEFFKIIDRHNFDAVYLGNSKILIKEYRYFVRILRELRERFPNVMIIADLEPFFYPLAVYLGIDAFDTRSLKLYDFEGKGFTQFSPFLWSNEPNSLDFAREVILLVRKALEEGKLRYLVENFFPTQYNAGILRIADLEHPDYLEKYTPIQKETVYFISDASIRRPEVKRWHERVLERFTPPKNVELLLLFPCSAKKPYSFSRSHTLYRRAVKEALGSGTSKVHELILTSPFGVVPREWEWLAKYDIVVTGHWSEEEIKPAAELLAKTLEKYPEDIPIVAHLDEAYVEIAKLASELSGREIIFTDVKNGTTSHESLRSLTETLREFQIEGTKEDRTYRYFENIRKVFDFYFGVGAGEAILPENGQVKGSKMLRIFVEGQQTGTFTDGVISVTPYGMQRIYDALKSYWVKIDFELRGDVFAVGVEEADPRIRPDDIVGIVRDEKVVGVGKAVLSGEEMVRAKKGVAVKVRKRV.

The PUA domain occupies 496-565; it reads YDALKSYWVK…AKKGVAVKVR (70 aa).

This sequence belongs to the archaeosine synthase type 1 family. Forms a robust complex with the archaeosine synthase beta subunit RaSEA, likely an alpha(2)beta(2) heterotetrameric structure. Formation of this complex highly increases lysine transfer activity.

It carries out the reaction 7-cyano-7-carbaguanosine(15) in tRNA + L-lysine = 7-N-[(5S)-5-amino-5-carboxypentyl]formamidino-7-deazaguanosine(15) in tRNA. It functions in the pathway tRNA modification; archaeosine-tRNA biosynthesis. Functionally, functions in the biosynthesis of archaeosine, a modified nucleoside present in the dihydrouridine loop (D-loop) of archaeal tRNAs. Catalyzes the addition of L-lysine to the cyano group of 7-cyano-7-deazaguanine (preQ0)-modified tRNAs at position 15, to generate q0kN15-tRNA, a q0N lysine adduct identified as 7-N-[(5S)-5-amino-5-carboxypentyl]formamidino-7-deazaguanosine. This Thermococcus kodakarensis (strain ATCC BAA-918 / JCM 12380 / KOD1) (Pyrococcus kodakaraensis (strain KOD1)) protein is Archaeosine synthase subunit alpha.